The sequence spans 590 residues: Sperm-associated microtubule inner protein 4 (590 aa).

Threonine 219 bears the Phosphothreonine mark. Residues serine 407 and serine 422 each carry the phosphoserine modification. Residue lysine 427 forms a Glycyl lysine isopeptide (Lys-Gly) (interchain with G-Cter in SUMO2) linkage. A Phosphotyrosine modification is found at tyrosine 442. At serine 485 the chain carries Phosphoserine. Residue lysine 545 forms a Glycyl lysine isopeptide (Lys-Gly) (interchain with G-Cter in SUMO2) linkage. Phosphoserine is present on serine 547.

Predominantly expressed in the testes.

It localises to the cytoplasm. Its subcellular location is the cytoskeleton. It is found in the microtubule organizing center. The protein localises to the centrosome. The protein resides in the flagellum axoneme. Functionally, microtubule inner protein (MIP) part of the dynein-decorated doublet microtubules (DMTs) in flagellum axoneme. May serve to reinforce and thus stabilize the microtubule structure in the sperm flagella. This Homo sapiens (Human) protein is Sperm-associated microtubule inner protein 4.